Here is a 444-residue protein sequence, read N- to C-terminus: UDP-N-acetylglucosamine 1-carboxyvinyltransferase (444 aa).

Position 22-23 (22-23 (KN)) interacts with phosphoenolpyruvate. Arg94 is a binding site for UDP-N-acetyl-alpha-D-glucosamine. The Proton donor role is filled by Asp119. 2 residues coordinate UDP-N-acetyl-alpha-D-glucosamine: Asp309 and Val331.

Belongs to the EPSP synthase family. MurA subfamily.

Its subcellular location is the cytoplasm. The enzyme catalyses phosphoenolpyruvate + UDP-N-acetyl-alpha-D-glucosamine = UDP-N-acetyl-3-O-(1-carboxyvinyl)-alpha-D-glucosamine + phosphate. It functions in the pathway cell wall biogenesis; peptidoglycan biosynthesis. Cell wall formation. Adds enolpyruvyl to UDP-N-acetylglucosamine. This is UDP-N-acetylglucosamine 1-carboxyvinyltransferase from Chlamydia abortus (strain DSM 27085 / S26/3) (Chlamydophila abortus).